Consider the following 182-residue polypeptide: Segregation and condensation protein B (182 aa).

The protein belongs to the ScpB family. Homodimer. Homodimerization may be required to stabilize the binding of ScpA to the Smc head domains. Component of a cohesin-like complex composed of ScpA, ScpB and the Smc homodimer, in which ScpA and ScpB bind to the head domain of Smc. The presence of the three proteins is required for the association of the complex with DNA.

It is found in the cytoplasm. Functionally, participates in chromosomal partition during cell division. May act via the formation of a condensin-like complex containing Smc and ScpA that pull DNA away from mid-cell into both cell halves. This chain is Segregation and condensation protein B, found in Staphylococcus saprophyticus subsp. saprophyticus (strain ATCC 15305 / DSM 20229 / NCIMB 8711 / NCTC 7292 / S-41).